Reading from the N-terminus, the 248-residue chain is 3-deoxy-manno-octulosonate cytidylyltransferase (248 aa).

Belongs to the KdsB family.

The protein localises to the cytoplasm. The enzyme catalyses 3-deoxy-alpha-D-manno-oct-2-ulosonate + CTP = CMP-3-deoxy-beta-D-manno-octulosonate + diphosphate. Its pathway is nucleotide-sugar biosynthesis; CMP-3-deoxy-D-manno-octulosonate biosynthesis; CMP-3-deoxy-D-manno-octulosonate from 3-deoxy-D-manno-octulosonate and CTP: step 1/1. It functions in the pathway bacterial outer membrane biogenesis; lipopolysaccharide biosynthesis. Functionally, activates KDO (a required 8-carbon sugar) for incorporation into bacterial lipopolysaccharide in Gram-negative bacteria. This chain is 3-deoxy-manno-octulosonate cytidylyltransferase, found in Escherichia coli O127:H6 (strain E2348/69 / EPEC).